A 162-amino-acid chain; its full sequence is Nucleotide-binding protein Anae109_0095 (162 aa).

Belongs to the YajQ family.

Functionally, nucleotide-binding protein. This Anaeromyxobacter sp. (strain Fw109-5) protein is Nucleotide-binding protein Anae109_0095.